A 254-amino-acid polypeptide reads, in one-letter code: 5-oxoprolinase subunit A (254 aa).

This sequence belongs to the LamB/PxpA family. Forms a complex composed of PxpA, PxpB and PxpC.

The enzyme catalyses 5-oxo-L-proline + ATP + 2 H2O = L-glutamate + ADP + phosphate + H(+). Its function is as follows. Catalyzes the cleavage of 5-oxoproline to form L-glutamate coupled to the hydrolysis of ATP to ADP and inorganic phosphate. This Burkholderia vietnamiensis (strain G4 / LMG 22486) (Burkholderia cepacia (strain R1808)) protein is 5-oxoprolinase subunit A.